The chain runs to 1209 residues: 3',5'-cyclic-AMP phosphodiesterase, isoform I (1209 aa).

Disordered regions lie at residues 16-35 (NVAKHRGSGSSNGTGNGSGT), 59-82 (GGGSGSGGGGCGSGSGSGSGKRKS), 275-353 (LYSG…PLPP), 372-403 (SATSSSAGTVPPGGQQTQEYIAGTSSTPSPRI), 442-498 (ETLA…MQAE), 626-655 (VPASNKSRRPNQSSSASRSGNPPGAPLSQG), and 754-792 (SAGQYARSRSPRGPPMSQISGVKRPLSHTNSFTGERLPT). Composition is skewed to gly residues over residues 25–35 (SSNGTGNGSGT) and 59–77 (GGGSGSGGGGCGSGSGSGS). A compositionally biased stretch (polar residues) spans 275-290 (LYSGSNPSTNPCQSAV). Residues 291 to 314 (QNQGQNSNPNPNQNPNTNPNQNQQ) show a composition bias toward low complexity. A compositionally biased stretch (polar residues) spans 315–324 (RCSCQPQTSP). Residues 372 to 383 (SATSSSAGTVPP) are compositionally biased toward low complexity. The segment covering 385–400 (GQQTQEYIAGTSSTPS) has biased composition (polar residues). Composition is skewed to low complexity over residues 445–462 (ASSSTTGGTATTTQNSSS) and 472–483 (TSSSASALATSH). Composition is skewed to polar residues over residues 484–498 (PSNSQLLPTSKMQAE) and 627–645 (PASNKSRRPNQSSSASRSG). In terms of domain architecture, PDEase spans 795–1124 (VETPRENELG…DYYQSMIPPS (330 aa)). Histidine 871 functions as the Proton donor in the catalytic mechanism. 871–875 (HNSLH) is a binding site for 3',5'-cyclic AMP. Residues histidine 875, histidine 911, aspartate 912, and aspartate 1029 each contribute to the a divalent metal cation site. 3',5'-cyclic AMP is bound by residues aspartate 912, aspartate 1029, and glutamine 1080. Residues 1146-1163 (EESDQENLAELEEGDESG) show a composition bias toward acidic residues. A disordered region spans residues 1146 to 1209 (EESDQENLAE…CQNQPQHGGM (64 aa)). Over residues 1164–1181 (GESTTTGTTGTTAASALS) the composition is skewed to low complexity. Residues 1182 to 1193 (GAGGGGGGGGGM) are compositionally biased toward gly residues. Residues 1199-1209 (GCQNQPQHGGM) show a composition bias toward polar residues.

It belongs to the cyclic nucleotide phosphodiesterase family. PDE4 subfamily. As to quaternary structure, monomer. Requires a divalent metal cation as cofactor.

The enzyme catalyses 3',5'-cyclic AMP + H2O = AMP + H(+). It participates in purine metabolism; 3',5'-cyclic AMP degradation; AMP from 3',5'-cyclic AMP: step 1/1. Its function is as follows. Hydrolyzes the second messenger cAMP, which is a key regulator of many important physiological processes. Vital for female fertility. Required for learning/memory. The polypeptide is 3',5'-cyclic-AMP phosphodiesterase, isoform I (Drosophila melanogaster (Fruit fly)).